The sequence spans 546 residues: MRIFMKSKLLVIATTALLFAACSDSFLDRAPEGNYVDATFYTSDEALEAATAPLYNRAWFDYNQRSIVPIGSGRANDMYSPWNYPQFVTFQVTALDENLSGAWSGFYSVVTMANSVINAVETQTQGSVSEAAKTKAIAEARLMRACAYFYMLRIWGPVILIEDNQKLVDNPVRPLNREEDVFQFIINDLNYAVDNLSEQSDKGRATSWAAKGILAKVYLARSGWNNGGTRDEGDLELARQYASDVCENSGLDLMTNYEDLFKYKNNNNQESLLAMQWVPLGEWYECNTLLSDLAFSTEVTGGVNCWSSYNGSIDMLQQYELADTLRRNATFFTKGSYYSYICIKDGGYTYKGTASPIKKGVPGGPDDDNDGKVKQMNSPLNTYILRLADVYLTYAEACLGNNSTLSDGRGLYFFNRVRERAKINKKSSITLDDIIRERRVEFGMEYSNWYDMVTWFRYLPDKMLNYFNNQWRGYRTDAIIKDEDGKLHFGKYDTDGTTFLEGPEYYTAPEFTINIEAEDIFLPYPESDVIQNPLLNEPPVPYTFNE.

The first 21 residues, 1–21, serve as a signal peptide directing secretion; that stretch reads MRIFMKSKLLVIATTALLFAA. Cys-22 is lipidated: N-palmitoyl cysteine. Cys-22 carries the S-diacylglycerol cysteine lipid modification.

This sequence belongs to the SusD family.

It is found in the cell outer membrane. Its pathway is glucan metabolism; xyloglucan degradation. Functionally, polysaccharide-binding protein present at the surface of the cell. Probably mediates xyloglucan-binding before xyloglucan transport in the periplasm for degradation. This chain is SusD-like protein BACOVA_02651, found in Bacteroides ovatus (strain ATCC 8483 / DSM 1896 / JCM 5824 / BCRC 10623 / CCUG 4943 / NCTC 11153).